Consider the following 279-residue polypeptide: Type II iodothyronine deiodinase (279 aa).

Residues 1–7 (MGLLSAD) lie on the Lumenal side of the membrane. The helical; Signal-anchor for type III membrane protein transmembrane segment at 8 to 28 (LLITLQILPVFFSNCLFLALY) threads the bilayer. The Cytoplasmic portion of the chain corresponds to 29–279 (DSVILLKHMV…TEDLSTDVSL (251 aa)). Residue U132 is part of the active site. 2 non-standard amino acids (selenocysteine) are found at residues U132 and U265.

Belongs to the iodothyronine deiodinase family. In terms of assembly, predominantly monomer. Can form homodimers but homodimerization is not essential for enzyme activity. Highly expressed in liver and in various parts of the brain including telencephalon, hippocampus, cerebellum, and brain stem, and weakly expressed in thyroid, lung, and small intestine. Not detected in skeletal muscle, heart atria or ventricle, gizzard or kidney.

The protein resides in the endoplasmic reticulum membrane. The enzyme catalyses 3,3',5-triiodo-L-thyronine + iodide + A + H(+) = L-thyroxine + AH2. The catalysed reaction is 3,3'-diiodo-L-thyronine + iodide + A + H(+) = 3,3',5'-triiodo-L-thyronine + AH2. It carries out the reaction 3'-iodo-L-thyronine + iodide + A + H(+) = 3',5'-diiodo-L-thyronine + AH2. It catalyses the reaction 3,3'-diiodothyronamine + iodide + A + H(+) = 3,3',5'-triiodothyronamine + AH2. The enzyme catalyses 3'-iodothyronamine + iodide + A + H(+) = 3',5'-diiodothyronamine + AH2. With respect to regulation, not inhibited by N(6)-propylthiouracil. Plays a crucial role in the metabolism of thyroid hormones (TH) and has specific roles in TH activation and inactivation by deiodination. Catalyzes the deiodination of L-thyroxine (T4) to 3,5,3'-triiodothyronine (T3) and 3,3',5'-triiodothyronine (rT3) to 3,3'-diiodothyronine (3,3'-T2) via outer-ring deiodination (ORD). Catalyzes the deiodination of 3',5'-diiodothyronine (3',5'-T2) to 3'-monoiodothyronine (3'-T1) via ORD. Catalyzes the phenolic ring deiodinations of 3,3',5'-triiodothyronamine and 3',5'- diiodothyronamine. In Gallus gallus (Chicken), this protein is Type II iodothyronine deiodinase (DIO2).